The following is a 127-amino-acid chain: Fumarate reductase subunit C (127 aa).

The next 3 helical transmembrane spans lie at 30–50 (ATIL…GCLV), 67–87 (IVVV…QTFF), and 107–127 (IIVL…LVLV).

It belongs to the FrdC family. As to quaternary structure, part of an enzyme complex containing four subunits: a flavoprotein (FrdA), an iron-sulfur protein (FrdB), and two hydrophobic anchor proteins (FrdC and FrdD).

It localises to the cell inner membrane. In terms of biological role, anchors the catalytic components of the fumarate reductase complex to the cell membrane, binds quinones. The chain is Fumarate reductase subunit C from Photobacterium profundum (strain SS9).